The following is a 697-amino-acid chain: MARTIPLERVRNIGIAAHIDAGKTTTTERILFYSGVVHKMGEVHEGTAVTDWMAQERERGITITAAAISTSWLDHRINIIDTPGHVDFTIEVERSMRVLDGVIAVFCSVGGVQPQSETVWRQAERYQVPRIAFINKMDRTGADFFKVYGQIRDRLRANAVPIQVPVGRESDFHGLVDLVAMKTYLYTNDLGTDIQVSDEIPEEVQDLVAEYREKLLEAVAETDEALMEKYLEQLEGGEALTEEEIRHSLRQGTIKGLIVPVICGSSFKNRGVQRLLDAVVDYLPAPTEVPPIKGVLPDGEEGVRYADDDAPLSALAFKVMADPYGRLTFVRVYSGVLQKGSYIYNATKNKKERISRLIVLKSDERIEVEELRAGDLGAALGLKDTLTGDTICDEANSIILESLYIPEPVISVAVEPKTKQDMEKLSKALQSLSEEDPTFRVSIDSETNQTVIAGMGELHLEILVDRMLREFKVEANIGAPQVAYRETIRKSIRTEGKFIRQSGGKGQYGHVVIELEPGEPGSGFEFVSKIVGGSVPKEYINPAEQGMKEACESGVIAGYPLIDVKATLVDGSYHEVDSSEMAFKIAGSMAIKNGVTKASPVLLEPMMKVEVEVPEDFIGNVIGDLNSRRGQIEGQETDQSQSIAKVVAKVPLATMFGYATDIRSKTQGRGVFSMEFSHYEEVPRSVAETIIAKSKGN.

A tr-type G domain is found at 8–287; it reads ERVRNIGIAA…AVVDYLPAPT (280 aa). Residues 17–24, 81–85, and 135–138 contribute to the GTP site; these read AHIDAGKT, DTPGH, and NKMD.

This sequence belongs to the TRAFAC class translation factor GTPase superfamily. Classic translation factor GTPase family. EF-G/EF-2 subfamily.

Its subcellular location is the cytoplasm. Its function is as follows. Catalyzes the GTP-dependent ribosomal translocation step during translation elongation. During this step, the ribosome changes from the pre-translocational (PRE) to the post-translocational (POST) state as the newly formed A-site-bound peptidyl-tRNA and P-site-bound deacylated tRNA move to the P and E sites, respectively. Catalyzes the coordinated movement of the two tRNA molecules, the mRNA and conformational changes in the ribosome. This chain is Elongation factor G (fusA), found in Arthrospira platensis (Spirulina platensis).